The following is a 462-amino-acid chain: Putative endoglucanase type B (462 aa).

An N-terminal signal peptide occupies residues 1-16; it reads MAYKLILAAFAATALA. Positions 25-61 constitute a CBM1 domain; sequence CSNGVWAQCGGQNWSGTPCCTSGNKCVKLNDFYSQCQ. 2 disulfide bridges follow: Cys33–Cys50 and Cys44–Cys60. An N-linked (GlcNAc...) asparagine glycan is attached at Asn37. Positions 64-100 are enriched in low complexity; the sequence is SAEPSSTAAGPSSTTATKTTATGGSSTTAGGSVTSAP. Residues 64-102 are disordered; that stretch reads SAEPSSTAAGPSSTTATKTTATGGSSTTAGGSVTSAPPA. A linker region spans residues 66–99; sequence EPSSTAAGPSSTTATKTTATGGSSTTAGGSVTSA. The tract at residues 100 to 462 is catalytic; it reads PPAASDNPYA…LLDNANPSFL (363 aa). Residue Asp190 is part of the active site. Cys191 and Cys250 are joined by a disulfide. Asn223 is a glycosylation site (N-linked (GlcNAc...) asparagine). Residue Asp236 is the Proton donor of the active site. N-linked (GlcNAc...) asparagine glycans are attached at residues Asn272 and Asn317. Residues Cys383 and Cys430 are joined by a disulfide bond. Asp416 serves as the catalytic Nucleophile.

It belongs to the glycosyl hydrolase 6 (cellulase B) family.

It carries out the reaction Endohydrolysis of (1-&gt;4)-beta-D-glucosidic linkages in cellulose, lichenin and cereal beta-D-glucans.. This is Putative endoglucanase type B from Fusarium oxysporum (Fusarium vascular wilt).